Reading from the N-terminus, the 403-residue chain is MTESTFPQYPRLVLSKGREKSLLRRHPWVFSGAVSRLEGKANLGETIDIVDHQGKWLARGAWSPASQIRARVWTFDKAESIDIAFFTRRLRQAQQWRDWLAKKDGLDSYRLIAGESDGLPGVTIDRFGHFLVLQLLSAGAEYQRAALISALQTCDPDCAIYDRSDVAVRKKEGMALTQGPVTGELPPALLPIEEHGMKLLVDIQGGHKTGYYLDQRDSRLATRRYVENQRVLNCFSYTGGFAVSALMGGCRQVVSVDTSQDALDIARQNVELNQLDLSKAEFVRDDVFKLLRAYREHGEKFDVIIMDPPKFVENKSQLMGACRGYKDINMLAIQLLNPGGILLTFSCSGLMTSDLFQKIIADAAIDAGRDVQFIEQFRQAADHPVIATYPEGLYLKGFACRVM.

A PUA domain is found at 9–88 (YPRLVLSKGR…ESIDIAFFTR (80 aa)).

The protein belongs to the methyltransferase superfamily. RlmI family.

Its subcellular location is the cytoplasm. It catalyses the reaction cytidine(1962) in 23S rRNA + S-adenosyl-L-methionine = 5-methylcytidine(1962) in 23S rRNA + S-adenosyl-L-homocysteine + H(+). Its function is as follows. Specifically methylates the cytosine at position 1962 (m5C1962) of 23S rRNA. In Salmonella enteritidis PT4 (strain P125109), this protein is Ribosomal RNA large subunit methyltransferase I.